The sequence spans 161 residues: Putative sporulation sigma factor-processing peptidase (161 aa).

The active site involves D38.

Belongs to the peptidase U4 family.

Its function is as follows. Probably activates the RNA polymerase sigma-35 factor at the stage II of sporulation. The polypeptide is Putative sporulation sigma factor-processing peptidase (Bacillus thuringiensis subsp. kurstaki).